Here is a 221-residue protein sequence, read N- to C-terminus: UPF0758 protein YicR (221 aa).

One can recognise an MPN domain in the interval 99-221 (ALLSPEMTRE…YVSFAERGWI (123 aa)). Zn(2+) is bound by residues His170, His172, and Asp183. A JAMM motif motif is present at residues 170 to 183 (HNHPSGCAEPSKAD).

It belongs to the UPF0758 family. YicR subfamily.

The protein is UPF0758 protein YicR of Salmonella newport (strain SL254).